Consider the following 735-residue polypeptide: Tripartite terminase subunit 3 (735 aa).

Residues 183–189 carry the Nuclear localization signal motif; sequence PKKRAKV. The short motif at 258–265 is the Walker A motif element; that stretch reads VPRRHGKT. The Walker B motif motif lies at 352–357; the sequence is LLFVDE. The active-site For ATPase activity is Glu-357. Active-site for nuclease activity residues include Asp-509, Glu-581, and Asp-707.

The protein belongs to the herpesviridae TRM3 protein family. Interacts with the terminase subunits TRM1 and TRM2. Interacts with portal protein.

The protein resides in the host nucleus. Its function is as follows. Component of the molecular motor that translocates viral genomic DNA in empty capsid during DNA packaging. Forms a tripartite terminase complex together with TRM1 and TRM2 in the host cytoplasm. Once the complex reaches the host nucleus, it interacts with the capsid portal vertex. This portal forms a ring in which genomic DNA is translocated into the capsid. TRM3 carries an RNase H-like nuclease activity that plays an important role for the cleavage of concatemeric viral DNA into unit length genomes. This is Tripartite terminase subunit 3 from Homo sapiens (Human).